Consider the following 225-residue polypeptide: Triosephosphate isomerase (225 aa).

Residue 9 to 11 (NMK) coordinates substrate. His93 functions as the Electrophile in the catalytic mechanism. The Proton acceptor role is filled by Glu141. Substrate is bound by residues Ile146, Gly181, and 202-203 (AS).

It belongs to the triosephosphate isomerase family. In terms of assembly, homotetramer; dimer of dimers.

It localises to the cytoplasm. The catalysed reaction is D-glyceraldehyde 3-phosphate = dihydroxyacetone phosphate. Its pathway is carbohydrate biosynthesis; gluconeogenesis. It participates in carbohydrate degradation; glycolysis; D-glyceraldehyde 3-phosphate from glycerone phosphate: step 1/1. Its function is as follows. Involved in the gluconeogenesis. Catalyzes stereospecifically the conversion of dihydroxyacetone phosphate (DHAP) to D-glyceraldehyde-3-phosphate (G3P). In Caldivirga maquilingensis (strain ATCC 700844 / DSM 13496 / JCM 10307 / IC-167), this protein is Triosephosphate isomerase.